The chain runs to 249 residues: DNA polymerase sliding clamp (249 aa).

Belongs to the PCNA family. The subunits circularize to form a toroid; DNA passes through its center. Replication factor C (RFC) is required to load the toroid on the DNA. Homotrimer. Interacts with NucS.

In terms of biological role, sliding clamp subunit that acts as a moving platform for DNA processing. Responsible for tethering the catalytic subunit of DNA polymerase and other proteins to DNA during high-speed replication. Regulates activity of NucS endonuclease and prevents non-specific cleavage. This Pyrococcus abyssi (strain GE5 / Orsay) protein is DNA polymerase sliding clamp.